The following is a 322-amino-acid chain: Tetraacyldisaccharide 4'-kinase (322 aa).

54 to 61 is an ATP binding site; it reads SVGGTGKT.

This sequence belongs to the LpxK family.

It carries out the reaction a lipid A disaccharide + ATP = a lipid IVA + ADP + H(+). The protein operates within glycolipid biosynthesis; lipid IV(A) biosynthesis; lipid IV(A) from (3R)-3-hydroxytetradecanoyl-[acyl-carrier-protein] and UDP-N-acetyl-alpha-D-glucosamine: step 6/6. Its function is as follows. Transfers the gamma-phosphate of ATP to the 4'-position of a tetraacyldisaccharide 1-phosphate intermediate (termed DS-1-P) to form tetraacyldisaccharide 1,4'-bis-phosphate (lipid IVA). The sequence is that of Tetraacyldisaccharide 4'-kinase from Francisella tularensis subsp. tularensis (strain FSC 198).